Reading from the N-terminus, the 228-residue chain is 7-cyano-7-deazaguanine synthase (228 aa).

An ATP-binding site is contributed by 8 to 18 (LSGGLDSTTCL). Residues Cys188, Cys198, Cys201, and Cys204 each coordinate Zn(2+).

This sequence belongs to the QueC family. It depends on Zn(2+) as a cofactor.

It catalyses the reaction 7-carboxy-7-deazaguanine + NH4(+) + ATP = 7-cyano-7-deazaguanine + ADP + phosphate + H2O + H(+). It functions in the pathway purine metabolism; 7-cyano-7-deazaguanine biosynthesis. Its function is as follows. Catalyzes the ATP-dependent conversion of 7-carboxy-7-deazaguanine (CDG) to 7-cyano-7-deazaguanine (preQ(0)). This is 7-cyano-7-deazaguanine synthase from Legionella pneumophila subsp. pneumophila (strain Philadelphia 1 / ATCC 33152 / DSM 7513).